The sequence spans 490 residues: Probable cytosol aminopeptidase (490 aa).

The Mn(2+) site is built by Lys256 and Asp261. Residue Lys268 is part of the active site. Positions 280, 340, and 342 each coordinate Mn(2+). Arg344 is a catalytic residue.

Belongs to the peptidase M17 family. Requires Mn(2+) as cofactor.

It is found in the cytoplasm. It carries out the reaction Release of an N-terminal amino acid, Xaa-|-Yaa-, in which Xaa is preferably Leu, but may be other amino acids including Pro although not Arg or Lys, and Yaa may be Pro. Amino acid amides and methyl esters are also readily hydrolyzed, but rates on arylamides are exceedingly low.. It catalyses the reaction Release of an N-terminal amino acid, preferentially leucine, but not glutamic or aspartic acids.. In terms of biological role, presumably involved in the processing and regular turnover of intracellular proteins. Catalyzes the removal of unsubstituted N-terminal amino acids from various peptides. In Synechococcus sp. (strain CC9902), this protein is Probable cytosol aminopeptidase.